Reading from the N-terminus, the 446-residue chain is Exodeoxyribonuclease 7 large subunit (446 aa).

This sequence belongs to the XseA family. In terms of assembly, heterooligomer composed of large and small subunits.

The protein resides in the cytoplasm. It catalyses the reaction Exonucleolytic cleavage in either 5'- to 3'- or 3'- to 5'-direction to yield nucleoside 5'-phosphates.. Functionally, bidirectionally degrades single-stranded DNA into large acid-insoluble oligonucleotides, which are then degraded further into small acid-soluble oligonucleotides. This chain is Exodeoxyribonuclease 7 large subunit, found in Streptococcus pyogenes serotype M3 (strain ATCC BAA-595 / MGAS315).